A 131-amino-acid chain; its full sequence is Squamosa promoter-binding-like protein 3 (131 aa).

Positions 1–17 (MSMRRSKAEGKRSLREL) are enriched in basic and acidic residues. Residues 1-54 (MSMRRSKAEGKRSLRELSEEEEEEEETEDEDTFEEEEALEKKQKGKATSSSGVC) are disordered. The span at 18-38 (SEEEEEEEETEDEDTFEEEEA) shows a compositional bias: acidic residues. Residues 45 to 129 (GKATSSSGVC…GHNERRRKST (85 aa)) form a sufficient and necessary for DNA binding region. The SBP-type zinc-finger motif lies at 51 to 128 (SGVCQVESCT…AGHNERRRKS (78 aa)). Residues Cys54, Cys59, Cys76, His79, Cys95, Cys98, His102, and Cys114 each coordinate Zn(2+). A Bipartite nuclear localization signal motif is present at residues 111–127 (KRSCRRRLAGHNERRRK).

Requires Zn(2+) as cofactor. Expressed in vegetative and inflorescence apical meristems, floral meristems, leaf and flower organ primordia, inflorescence stem tissue and to lower extent in roots.

It localises to the nucleus. The protein resides in the cytoplasm. In terms of biological role, trans-acting factor that binds specifically to the consensus nucleotide sequence 5'-TNCGTACAA-3' of AP1 promoter. Binds specifically to the 5'-GTAC-3' core sequence. Promotes both vegetative phase change and flowering. Regulates phase-specific patterns of leaf epidermal differentiation and flowering time, but does not seem to affect leaf shape. The sequence is that of Squamosa promoter-binding-like protein 3 (SPL3) from Arabidopsis thaliana (Mouse-ear cress).